The primary structure comprises 173 residues: Large ribosomal subunit protein uL15 (173 aa).

Over residues 1–11 (MKLNEIRDNQG) the composition is skewed to basic and acidic residues. The interval 1–50 (MKLNEIRDNQGARKSRVRVGRGIGSGLGKTGGRGQKGQKSRSGVSINGFE) is disordered. Residues 21–35 (RGIGSGLGKTGGRGQ) show a composition bias toward gly residues.

It belongs to the universal ribosomal protein uL15 family. In terms of assembly, part of the 50S ribosomal subunit.

Functionally, binds to the 23S rRNA. This is Large ribosomal subunit protein uL15 from Rhizorhabdus wittichii (strain DSM 6014 / CCUG 31198 / JCM 15750 / NBRC 105917 / EY 4224 / RW1) (Sphingomonas wittichii).